The sequence spans 612 residues: MPQYRSKTSTHGRNMAGARALWRATGVKDDDFGKPIIAIANSFTQFVPGHVHLKDMGQLVAGAVEAAGGIAKEFNTIAIDDGIAMGHSGMLYSLPSRDLIADSIEYMVNAHCADAIVCISNCDKITPGMLMAALRLNIPVIFVSGGPMEAGKTKLSDQIIKLDLVDAMVMGPDKNVSDEDLAKVERSACPTCGSCSGMFTANSMNCLTEALGLSLPGNGSMLATHADREQLFLEAGERIVDITKRHYEQDDYSVLPRAIACREAFENAMALDIAMGGSTNTILHLLACAQEAELDYTVADMDEMSRRIPQLCKVAPSTPLYHMEDVHRAGGVMAILGELDRAGLLNSDIPTILSPTMKEQLAKYDIMQTDDPKIIDFYRAGPAGIRTVKPFSQSCRWDTVDNDRAAGCVRSLEHAFSTEGGLAVLFGNMAVDGAVVKTAGVDNDNLTFTGPAKIYESQDTAVAAILGGKVVEGDVVVIRYEGPQGGPGMQEMLYPTSYLKSMGLGKKCALVTDGRFSGGTSGLSIGHASPEAAAGGVIGLIEDGDIIDINIPTRTMDLKVSDEILAERRIAMDIHGWKPVSRERHVSTALKVYALMATSADKGAIRDISKLK.

Aspartate 81 contacts Mg(2+). [2Fe-2S] cluster is bound at residue cysteine 122. Positions 123 and 124 each coordinate Mg(2+). Position 124 is an N6-carboxylysine (lysine 124). Cysteine 195 provides a ligand contact to [2Fe-2S] cluster. Glutamate 491 is a binding site for Mg(2+). The active-site Proton acceptor is the serine 517.

This sequence belongs to the IlvD/Edd family. As to quaternary structure, homodimer. [2Fe-2S] cluster serves as cofactor. Requires Mg(2+) as cofactor.

The enzyme catalyses (2R)-2,3-dihydroxy-3-methylbutanoate = 3-methyl-2-oxobutanoate + H2O. The catalysed reaction is (2R,3R)-2,3-dihydroxy-3-methylpentanoate = (S)-3-methyl-2-oxopentanoate + H2O. It participates in amino-acid biosynthesis; L-isoleucine biosynthesis; L-isoleucine from 2-oxobutanoate: step 3/4. Its pathway is amino-acid biosynthesis; L-valine biosynthesis; L-valine from pyruvate: step 3/4. Its function is as follows. Functions in the biosynthesis of branched-chain amino acids. Catalyzes the dehydration of (2R,3R)-2,3-dihydroxy-3-methylpentanoate (2,3-dihydroxy-3-methylvalerate) into 2-oxo-3-methylpentanoate (2-oxo-3-methylvalerate) and of (2R)-2,3-dihydroxy-3-methylbutanoate (2,3-dihydroxyisovalerate) into 2-oxo-3-methylbutanoate (2-oxoisovalerate), the penultimate precursor to L-isoleucine and L-valine, respectively. In Psychromonas ingrahamii (strain DSM 17664 / CCUG 51855 / 37), this protein is Dihydroxy-acid dehydratase.